The chain runs to 377 residues: Alanine racemase (377 aa).

The active-site Proton acceptor; specific for D-alanine is lysine 37. At lysine 37 the chain carries N6-(pyridoxal phosphate)lysine. Residue arginine 135 coordinates substrate. Residue tyrosine 271 is the Proton acceptor; specific for L-alanine of the active site. Methionine 319 lines the substrate pocket.

The protein belongs to the alanine racemase family. Pyridoxal 5'-phosphate serves as cofactor.

It catalyses the reaction L-alanine = D-alanine. It participates in amino-acid biosynthesis; D-alanine biosynthesis; D-alanine from L-alanine: step 1/1. In terms of biological role, catalyzes the interconversion of L-alanine and D-alanine. May also act on other amino acids. This chain is Alanine racemase (alr), found in Helicobacter acinonychis (strain Sheeba).